A 188-amino-acid chain; its full sequence is Cell division protein SepF (188 aa).

The interval 29–53 is disordered; it reads EQQDQDQRATQADGGALATLGDSNP.

It belongs to the SepF family. In terms of assembly, homodimer. Interacts with FtsZ.

The protein localises to the cytoplasm. Its function is as follows. Cell division protein that is part of the divisome complex and is recruited early to the Z-ring. Probably stimulates Z-ring formation, perhaps through the cross-linking of FtsZ protofilaments. Its function overlaps with FtsA. The chain is Cell division protein SepF from Synechococcus sp. (strain CC9902).